The sequence spans 152 residues: 3-dehydroquinate dehydratase (152 aa).

Residue tyrosine 26 is the Proton acceptor of the active site. Substrate contacts are provided by asparagine 78, histidine 84, and aspartate 91. The Proton donor role is filled by histidine 104. Substrate-binding positions include 105 to 106 (IS) and arginine 115.

It belongs to the type-II 3-dehydroquinase family. As to quaternary structure, homododecamer.

The enzyme catalyses 3-dehydroquinate = 3-dehydroshikimate + H2O. It participates in metabolic intermediate biosynthesis; chorismate biosynthesis; chorismate from D-erythrose 4-phosphate and phosphoenolpyruvate: step 3/7. In terms of biological role, catalyzes a trans-dehydration via an enolate intermediate. The protein is 3-dehydroquinate dehydratase of Buchnera aphidicola subsp. Cinara cedri (strain Cc).